A 305-amino-acid chain; its full sequence is Glycine--tRNA ligase alpha subunit (305 aa).

The protein belongs to the class-II aminoacyl-tRNA synthetase family. In terms of assembly, tetramer of two alpha and two beta subunits.

The protein resides in the cytoplasm. It catalyses the reaction tRNA(Gly) + glycine + ATP = glycyl-tRNA(Gly) + AMP + diphosphate. This is Glycine--tRNA ligase alpha subunit from Streptococcus pneumoniae (strain CGSP14).